The following is a 310-amino-acid chain: MERWAAPKVTAGSARRYVADQPSFSSTLLDAIYKSMDEQPGHGGGATGVEAVAAAAKKQHEAALHYGNYYKPSLAGSYRARAPGPHATTSSSSECSSYGGFSSSEAESSHHRRLRPIRTTVPGGAPGPAPEKKAKKPGASIRAKLRDLRKPASPGARLAGFLNSIFAGKRAPATPPSATAGAESACSTASSYSRSCLSKTPSTRGQAKRTVRFLDSDTESLASSTVVDRRRVPVEAVQQMLLQRMEMESDEDDDESSDASSDLFELENFAAIAPAGAAYRDELPVYETTRVALNRAIGHGYGHGRSARVV.

Residues 77 to 140 (SYRARAPGPH…EKKAKKPGAS (64 aa)) form a disordered region. Low complexity predominate over residues 90 to 106 (SSSSECSSYGGFSSSEA).

This sequence belongs to the BIG GRAIN 1 (BG1) plant protein family. Mostly expressed in the vascular tissues of leaves, culms and young panicles, especially in hulls.

Its subcellular location is the cell membrane. Its function is as follows. Involved in auxin transport. Positive regulator of the auxin signaling pathway involved in gravitropism, plant growth and grain development. In Oryza sativa subsp. japonica (Rice), this protein is Protein BIG GRAIN 1.